Here is a 567-residue protein sequence, read N- to C-terminus: Malate synthase, glyoxysomal (567 aa).

R182 functions as the Proton acceptor in the catalytic mechanism. Catalysis depends on D468, which acts as the Proton donor. The Microbody targeting signal signature appears at 565–567 (SKL).

The protein belongs to the malate synthase family.

The protein resides in the glyoxysome. It carries out the reaction glyoxylate + acetyl-CoA + H2O = (S)-malate + CoA + H(+). It participates in carbohydrate metabolism; glyoxylate cycle; (S)-malate from isocitrate: step 2/2. The chain is Malate synthase, glyoxysomal from Gossypium hirsutum (Upland cotton).